The following is a 257-amino-acid chain: tRNA pseudouridine synthase A (257 aa).

The active-site Nucleophile is D53. Substrate is bound at residue Y111.

The protein belongs to the tRNA pseudouridine synthase TruA family. In terms of assembly, homodimer.

The enzyme catalyses uridine(38/39/40) in tRNA = pseudouridine(38/39/40) in tRNA. Functionally, formation of pseudouridine at positions 38, 39 and 40 in the anticodon stem and loop of transfer RNAs. This is tRNA pseudouridine synthase A from Xylella fastidiosa (strain M23).